A 211-amino-acid chain; its full sequence is ATP phosphoribosyltransferase (211 aa).

This sequence belongs to the ATP phosphoribosyltransferase family. Short subfamily. As to quaternary structure, heteromultimer composed of HisG and HisZ subunits.

Its subcellular location is the cytoplasm. The enzyme catalyses 1-(5-phospho-beta-D-ribosyl)-ATP + diphosphate = 5-phospho-alpha-D-ribose 1-diphosphate + ATP. The protein operates within amino-acid biosynthesis; L-histidine biosynthesis; L-histidine from 5-phospho-alpha-D-ribose 1-diphosphate: step 1/9. Catalyzes the condensation of ATP and 5-phosphoribose 1-diphosphate to form N'-(5'-phosphoribosyl)-ATP (PR-ATP). Has a crucial role in the pathway because the rate of histidine biosynthesis seems to be controlled primarily by regulation of HisG enzymatic activity. The chain is ATP phosphoribosyltransferase from Thermosynechococcus vestitus (strain NIES-2133 / IAM M-273 / BP-1).